The sequence spans 860 residues: Transcription factor E2F8 (860 aa).

Disordered stretches follow at residues 1–27 (MENQ…PSSK) and 38–57 (DLGP…GEPW). Phosphoserine is present on residues Ser71 and Ser102. 2 DNA-binding regions span residues 113 to 182 (RKEK…TWHG) and 261 to 347 (RKDK…KWTG). Disordered stretches follow at residues 407–433 (RRKI…PPVP), 532–616 (LTPP…PKED), and 745–803 (QMSA…QPVP). A phosphoserine mark is found at Ser412 and Ser416. 2 stretches are compositionally biased toward polar residues: residues 412–429 (SAPS…SQNS) and 542–554 (VCPT…TGSK). The segment covering 555–565 (DPTDAPAEKTA) has biased composition (basic and acidic residues).

It belongs to the E2F/DP family. Interacts with HIF1A. Homodimer and heterodimer: mainly forms homodimers and, to a lesser extent, heterodimers with E2F8. Dimerization is important for DNA-binding. As to expression, highly expressed in liver, skin, thymus and testis. Expressed in trophoblast giant cells throughout placenta development (at protein level).

It is found in the nucleus. Its function is as follows. Atypical E2F transcription factor that participates in various processes such as angiogenesis and polyploidization of specialized cells. Mainly acts as a transcription repressor that binds DNA independently of DP proteins and specifically recognizes the E2 recognition site 5'-TTTC[CG]CGC-3'. Directly represses transcription of classical E2F transcription factors such as E2F1: component of a feedback loop in S phase by repressing the expression of E2F1, thereby preventing p53/TP53-dependent apoptosis. Plays a key role in polyploidization of cells in placenta and liver by regulating the endocycle, probably by repressing genes promoting cytokinesis and antagonizing action of classical E2F proteins (E2F1, E2F2 and/or E2F3). Required for placental development by promoting polyploidization of trophoblast giant cells. Acts as a promoter of sprouting angiogenesis, possibly by acting as a transcription activator: associates with HIF1A, recognizes and binds the VEGFA promoter, which is different from canonical E2 recognition site, and activates expression of the VEGFA gene. In Mus musculus (Mouse), this protein is Transcription factor E2F8 (E2f8).